A 141-amino-acid chain; its full sequence is ATP synthase F(0) complex subunit C2, mitochondrial (141 aa).

Residues 1 to 66 constitute a mitochondrion transit peptide; the sequence is MFSCFKFIST…RNFQTSAISR (66 aa). A helical membrane pass occupies residues 82 to 102; the sequence is VGVAGSGAGIGTVFGSLIIGY. Lysine 109 is modified (N6,N6,N6-trimethyllysine). A helical membrane pass occupies residues 117–137; that stretch reads ILGFALSEAMGLFCLMVAFLI.

The protein belongs to the ATPase C chain family. F-type ATPases have 2 components, CF(1) - the catalytic core - and CF(0) - the membrane proton channel. CF(1) has five subunits: alpha(3), beta(3), gamma(1), delta(1), epsilon(1). CF(0) has three main subunits: a, b and c. Interacts with DNAJC30; interaction is direct. Trimethylated by ATPSCKMT at Lys-109. Methylation is required for proper incorporation of the C subunit into the ATP synthase complex and mitochondrial respiration.

The protein resides in the mitochondrion membrane. Functionally, mitochondrial membrane ATP synthase (F(1)F(0) ATP synthase or Complex V) produces ATP from ADP in the presence of a proton gradient across the membrane which is generated by electron transport complexes of the respiratory chain. F-type ATPases consist of two structural domains, F(1) - containing the extramembraneous catalytic core and F(0) - containing the membrane proton channel, linked together by a central stalk and a peripheral stalk. During catalysis, ATP synthesis in the catalytic domain of F(1) is coupled via a rotary mechanism of the central stalk subunits to proton translocation. Part of the complex F(0) domain. A homomeric c-ring of probably 10 subunits is part of the complex rotary element. This is ATP synthase F(0) complex subunit C2, mitochondrial from Pongo abelii (Sumatran orangutan).